We begin with the raw amino-acid sequence, 31 residues long: MELLIQLTSLLLIVIAGPLVIALLFLKQGNL.

The chain crosses the membrane as a helical span at residues 5–25; the sequence is IQLTSLLLIVIAGPLVIALLF.

This sequence belongs to the Psb30/Ycf12 family. PSII is composed of 1 copy each of membrane proteins PsbA, PsbB, PsbC, PsbD, PsbE, PsbF, PsbH, PsbI, PsbJ, PsbK, PsbL, PsbM, PsbT, PsbX, PsbY, PsbZ, Psb30/Ycf12, peripheral proteins of the oxygen-evolving complex and a large number of cofactors. It forms dimeric complexes.

It is found in the plastid. Its subcellular location is the chloroplast thylakoid membrane. In terms of biological role, a core subunit of photosystem II (PSII), probably helps stabilize the reaction center. This chain is Photosystem II reaction center protein Psb30, found in Phacus acuminatus.